We begin with the raw amino-acid sequence, 388 residues long: Chorismate synthase (388 aa).

Residues Arg39 and Arg45 each contribute to the NADP(+) site. FMN is bound by residues 130 to 132 (RSS), 251 to 252 (NA), Gly296, 311 to 315 (KPIPT), and Arg337.

This sequence belongs to the chorismate synthase family. Homotetramer. FMNH2 serves as cofactor.

The enzyme catalyses 5-O-(1-carboxyvinyl)-3-phosphoshikimate = chorismate + phosphate. It participates in metabolic intermediate biosynthesis; chorismate biosynthesis; chorismate from D-erythrose 4-phosphate and phosphoenolpyruvate: step 7/7. Functionally, catalyzes the anti-1,4-elimination of the C-3 phosphate and the C-6 proR hydrogen from 5-enolpyruvylshikimate-3-phosphate (EPSP) to yield chorismate, which is the branch point compound that serves as the starting substrate for the three terminal pathways of aromatic amino acid biosynthesis. This reaction introduces a second double bond into the aromatic ring system. This Streptococcus suis (strain 98HAH33) protein is Chorismate synthase.